A 564-amino-acid chain; its full sequence is Probable metalloprotease ARX1 (564 aa).

It belongs to the peptidase M24 family. As to quaternary structure, component of the nucleoplasmic and cytoplasmic pre-60S ribosomal particles.

It localises to the cytoplasm. It is found in the nucleus. In terms of biological role, probable metalloprotease involved in proper assembly of pre-ribosomal particles during the biogenesis of the 60S ribosomal subunit. Accompanies the pre-60S particles to the cytoplasm. In Candida albicans (strain SC5314 / ATCC MYA-2876) (Yeast), this protein is Probable metalloprotease ARX1 (ARX1).